The sequence spans 39 residues: MDWRVIVVVSPLLIAATWAAINIGAAAIRQLQDVLGREA.

A helical membrane pass occupies residues 4–24 (RVIVVVSPLLIAATWAAINIG).

Belongs to the PsbY family. PSII is composed of 1 copy each of membrane proteins PsbA, PsbB, PsbC, PsbD, PsbE, PsbF, PsbH, PsbI, PsbJ, PsbK, PsbL, PsbM, PsbT, PsbX, PsbY, PsbZ, Psb30/Ycf12, peripheral proteins PsbO, CyanoQ (PsbQ), PsbU, PsbV and a large number of cofactors. It forms dimeric complexes.

It is found in the cellular thylakoid membrane. Its function is as follows. Loosely associated component of the core of photosystem II (PSII), it is not always seen in crystals. PSII is a light-driven water plastoquinone oxidoreductase, using light energy to abstract electrons from H(2)O, generating a proton gradient subsequently used for ATP formation. This Synechocystis sp. (strain ATCC 27184 / PCC 6803 / Kazusa) protein is Photosystem II reaction center protein Y.